The chain runs to 85 residues: F1845 adhesin operon regulatory protein (85 aa).

Its function is as follows. Regulates the transcription of genes involved in the biosynthesis of F1845 fimbrial adhesin. The chain is F1845 adhesin operon regulatory protein (daaA) from Escherichia coli.